Here is a 208-residue protein sequence, read N- to C-terminus: Imidazoleglycerol-phosphate dehydratase (208 aa).

It belongs to the imidazoleglycerol-phosphate dehydratase family.

The protein localises to the cytoplasm. It catalyses the reaction D-erythro-1-(imidazol-4-yl)glycerol 3-phosphate = 3-(imidazol-4-yl)-2-oxopropyl phosphate + H2O. It functions in the pathway amino-acid biosynthesis; L-histidine biosynthesis; L-histidine from 5-phospho-alpha-D-ribose 1-diphosphate: step 6/9. This chain is Imidazoleglycerol-phosphate dehydratase, found in Mycobacterium sp. (strain JLS).